The sequence spans 86 residues: Putative defensin-like protein 189 (86 aa).

Residues 1 to 28 (MKMAKSANEIGFITCLVVFLVLTGQSNG) form the signal peptide. Disulfide bonds link Cys-39–Cys-85, Cys-52–Cys-71, Cys-57–Cys-80, and Cys-61–Cys-82.

This sequence belongs to the DEFL family.

It is found in the secreted. In Arabidopsis thaliana (Mouse-ear cress), this protein is Putative defensin-like protein 189.